Consider the following 876-residue polypeptide: Leucine--tRNA ligase (876 aa).

Residues 1-20 are disordered; the sequence is MATERYNPRDAEPRWQQKWN. Residues 43-53 carry the 'HIGH' region motif; it reads PYPSGRIHMGH. The 'KMSKS' region signature appears at 632–636; that stretch reads KMSKS. Residue K635 participates in ATP binding.

This sequence belongs to the class-I aminoacyl-tRNA synthetase family.

The protein localises to the cytoplasm. It catalyses the reaction tRNA(Leu) + L-leucine + ATP = L-leucyl-tRNA(Leu) + AMP + diphosphate. The protein is Leucine--tRNA ligase of Rhizobium leguminosarum bv. trifolii (strain WSM2304).